The primary structure comprises 283 residues: Shikimate dehydrogenase (NADP(+)) (283 aa).

Residues 18–20 (SYS) and T66 each bind shikimate. Catalysis depends on K70, which acts as the Proton acceptor. Shikimate is bound by residues N91 and D106. Residues 130 to 134 (GAGGA) and M225 each bind NADP(+). Y227 lines the shikimate pocket. G248 serves as a coordination point for NADP(+).

It belongs to the shikimate dehydrogenase family. As to quaternary structure, homodimer.

It carries out the reaction shikimate + NADP(+) = 3-dehydroshikimate + NADPH + H(+). Its pathway is metabolic intermediate biosynthesis; chorismate biosynthesis; chorismate from D-erythrose 4-phosphate and phosphoenolpyruvate: step 4/7. Functionally, involved in the biosynthesis of the chorismate, which leads to the biosynthesis of aromatic amino acids. Catalyzes the reversible NADPH linked reduction of 3-dehydroshikimate (DHSA) to yield shikimate (SA). In Pelodictyon phaeoclathratiforme (strain DSM 5477 / BU-1), this protein is Shikimate dehydrogenase (NADP(+)).